We begin with the raw amino-acid sequence, 315 residues long: 4-hydroxy-3-methylbut-2-enyl diphosphate reductase (315 aa).

Cys-12 contributes to the [4Fe-4S] cluster binding site. 2 residues coordinate (2E)-4-hydroxy-3-methylbut-2-enyl diphosphate: His-41 and His-74. Positions 41 and 74 each coordinate dimethylallyl diphosphate. Isopentenyl diphosphate is bound by residues His-41 and His-74. Position 96 (Cys-96) interacts with [4Fe-4S] cluster. His-124 contacts (2E)-4-hydroxy-3-methylbut-2-enyl diphosphate. His-124 is a binding site for dimethylallyl diphosphate. His-124 lines the isopentenyl diphosphate pocket. Residue Glu-126 is the Proton donor of the active site. Residue Thr-168 participates in (2E)-4-hydroxy-3-methylbut-2-enyl diphosphate binding. Cys-198 serves as a coordination point for [4Fe-4S] cluster. 4 residues coordinate (2E)-4-hydroxy-3-methylbut-2-enyl diphosphate: Ser-226, Ser-227, Asn-228, and Ser-270. Residues Ser-226, Ser-227, Asn-228, and Ser-270 each contribute to the dimethylallyl diphosphate site. Positions 226, 227, 228, and 270 each coordinate isopentenyl diphosphate.

The protein belongs to the IspH family. [4Fe-4S] cluster is required as a cofactor.

It carries out the reaction isopentenyl diphosphate + 2 oxidized [2Fe-2S]-[ferredoxin] + H2O = (2E)-4-hydroxy-3-methylbut-2-enyl diphosphate + 2 reduced [2Fe-2S]-[ferredoxin] + 2 H(+). The catalysed reaction is dimethylallyl diphosphate + 2 oxidized [2Fe-2S]-[ferredoxin] + H2O = (2E)-4-hydroxy-3-methylbut-2-enyl diphosphate + 2 reduced [2Fe-2S]-[ferredoxin] + 2 H(+). It participates in isoprenoid biosynthesis; dimethylallyl diphosphate biosynthesis; dimethylallyl diphosphate from (2E)-4-hydroxy-3-methylbutenyl diphosphate: step 1/1. Its pathway is isoprenoid biosynthesis; isopentenyl diphosphate biosynthesis via DXP pathway; isopentenyl diphosphate from 1-deoxy-D-xylulose 5-phosphate: step 6/6. Its function is as follows. Catalyzes the conversion of 1-hydroxy-2-methyl-2-(E)-butenyl 4-diphosphate (HMBPP) into a mixture of isopentenyl diphosphate (IPP) and dimethylallyl diphosphate (DMAPP). Acts in the terminal step of the DOXP/MEP pathway for isoprenoid precursor biosynthesis. The sequence is that of 4-hydroxy-3-methylbut-2-enyl diphosphate reductase from Pseudomonas putida (strain GB-1).